The following is a 107-amino-acid chain: Nucleoid-associated protein Xfasm12_1216 (107 aa).

This sequence belongs to the YbaB/EbfC family. As to quaternary structure, homodimer.

It is found in the cytoplasm. It localises to the nucleoid. Its function is as follows. Binds to DNA and alters its conformation. May be involved in regulation of gene expression, nucleoid organization and DNA protection. In Xylella fastidiosa (strain M12), this protein is Nucleoid-associated protein Xfasm12_1216.